Consider the following 295-residue polypeptide: 2S seed storage protein (295 aa).

Positions Met-1–Ala-20 are cleaved as a signal peptide. Positions His-21 to Asn-161 are excised as a propeptide. The span at Glu-195–Tyr-208 shows a compositional bias: polar residues. The tract at residues Glu-195–Gln-215 is disordered.

This sequence belongs to the 2S seed storage albumins family. Post-translationally, the 38 kDa precursor may be cleaved into two polypeptides of approximately the same size. The mature protein is composed of a single polypeptide containing one or more intra-molecular disulfide linkages.

Its function is as follows. This is a 2S seed storage protein. The chain is 2S seed storage protein (HAG5) from Helianthus annuus (Common sunflower).